The primary structure comprises 188 residues: UPF0157 protein VC_A0354 (188 aa).

Belongs to the UPF0157 (GrpB) family.

This chain is UPF0157 protein VC_A0354, found in Vibrio cholerae serotype O1 (strain ATCC 39315 / El Tor Inaba N16961).